The following is a 253-amino-acid chain: Complement C1q subcomponent subunit B (253 aa).

The N-terminal stretch at 1–25 is a signal peptide; sequence MKTQWGEVWTHLLLLLLGFLHVSWA. Position 26 is a pyrrolidone carboxylic acid (Q26). A Collagen-like domain is found at 29–112; the sequence is CTGPPGIPGI…GPRGPKGDSG (84 aa). 5 positions are modified to 4-hydroxyproline: P33, P36, P39, P51, and P54. The disordered stretch occupies residues 35-115; sequence IPGIPGVPGV…GPKGDSGDYG (81 aa). 5-hydroxylysine is present on residues K57 and K60. The residue at position 63 (P63) is a 4-hydroxyproline. K75 carries the 5-hydroxylysine modification. Residues 78–96 show a composition bias toward low complexity; the sequence is PGIPGTPGKVGPKGPVGPK. A 4-hydroxyproline mark is found at P81 and P84. 5-hydroxylysine occurs at positions 90 and 96. P99 bears the 4-hydroxyproline mark. Residue K108 is modified to 5-hydroxylysine. The C1q domain occupies 115–253; it reads GATQKVAFSA…GFLLFPDMDA (139 aa). Cysteines 179 and 198 form a disulfide. Ca(2+) is bound by residues D199, Y200, and Q206.

Core component of the complement C1 complex, a calcium-dependent complex composed of 1 molecule of the C1Q subcomplex, 2 molecules of C1R and 2 molecules of C1S. The C1Q subcomplex is composed 18 subunits: 3 chains of C1QA, C1QB, and C1QC trimerize to form 6 collagen-like triple helices connected to six globular ligand-recognition modules (C1q domain). In terms of processing, hydroxylated on lysine and proline residues. Hydroxylated lysine residues can be glycosylated. Mouse C1Q contains up to 64.0 hydroxylysine-galactosylglucose residues. Total percentage hydroxylysine residues glycosylated is 95.1%. Contains no hydroxylysine-monosaccharides. In terms of tissue distribution, highest expression in thioglycolate-activated peritoneal macrophages. Also found in spleen, thymus and heart. Very weak expression liver, kidney, lung and intestine.

It localises to the secreted. The protein resides in the cell surface. Its activity is regulated as follows. The C1Q subcomplex is inhibited by sulfated molecules, such as triterpenoid sulfates, heparan sulfate, or chondroitin sulfates. Core component of the complement C1 complex, a multiprotein complex that initiates the classical pathway of the complement system, a cascade of proteins that leads to phagocytosis and breakdown of pathogens and signaling that strengthens the adaptive immune system. The classical complement pathway is initiated by the C1Q subcomplex of the C1 complex, which specifically binds IgG or IgM immunoglobulins complexed with antigens, forming antigen-antibody complexes on the surface of pathogens: C1QA, together with C1QB and C1QC, specifically recognizes and binds the Fc regions of IgG or IgM via its C1q domain. Immunoglobulin-binding activates the proenzyme C1R, which cleaves C1S, initiating the proteolytic cascade of the complement system. The C1Q subcomplex is activated by a hexamer of IgG complexed with antigens, while it is activated by a pentameric IgM. The C1Q subcomplex also recognizes and binds phosphatidylserine exposed on the surface of cells undergoing programmed cell death, possibly promoting activation of the complement system. The chain is Complement C1q subcomponent subunit B from Mus musculus (Mouse).